Reading from the N-terminus, the 144-residue chain is Arginine decarboxylase proenzyme (144 aa).

The Schiff-base intermediate with substrate; via pyruvic acid role is filled by Ser-80. Ser-80 is subject to Pyruvic acid (Ser); by autocatalysis. His-85 serves as the catalytic Proton acceptor; for processing activity. Residue Cys-100 is the Proton donor; for catalytic activity of the active site.

It belongs to the prokaryotic AdoMetDC family. Type 1 subfamily. In terms of assembly, heterooctamer of four alpha and four beta chains arranged as a tetramer of alpha/beta heterodimers. Pyruvate serves as cofactor. Post-translationally, is synthesized initially as an inactive proenzyme. Formation of the active enzyme involves a self-maturation process in which the active site pyruvoyl group is generated from an internal serine residue via an autocatalytic post-translational modification. Two non-identical subunits are generated from the proenzyme in this reaction, and the pyruvate is formed at the N-terminus of the alpha chain, which is derived from the carboxyl end of the proenzyme. The post-translation cleavage follows an unusual pathway, termed non-hydrolytic serinolysis, in which the side chain hydroxyl group of the serine supplies its oxygen atom to form the C-terminus of the beta chain, while the remainder of the serine residue undergoes an oxidative deamination to produce ammonia and the pyruvoyl group blocking the N-terminus of the alpha chain.

It carries out the reaction L-arginine + H(+) = agmatine + CO2. It functions in the pathway amine and polyamine biosynthesis; agmatine biosynthesis; agmatine from L-arginine: step 1/1. Specifically catalyzes the decarboxylation of L-arginine to agmatine. Has no S-adenosylmethionine decarboxylase (AdoMetDC) activity. The polypeptide is Arginine decarboxylase proenzyme (Ignicoccus hospitalis (strain KIN4/I / DSM 18386 / JCM 14125)).